We begin with the raw amino-acid sequence, 404 residues long: Starvation-sensing protein RspA (404 aa).

It belongs to the mandelate racemase/muconate lactonizing enzyme family.

Its function is as follows. Probably involved in the degradation of homoserine lactone (HSL) or of a metabolite of HSL that signals starvation. The chain is Starvation-sensing protein RspA from Escherichia coli (strain K12).